A 247-amino-acid chain; its full sequence is Protein NipSnap homolog 3B (247 aa).

2 positions are modified to N6-succinyllysine: Lys45 and Lys57.

It belongs to the NipSnap family.

The sequence is that of Protein NipSnap homolog 3B (NIPSNAP3B) from Homo sapiens (Human).